The following is a 187-amino-acid chain: NADH-quinone oxidoreductase subunit B (187 aa).

4 residues coordinate [4Fe-4S] cluster: cysteine 51, cysteine 52, cysteine 117, and cysteine 149.

It belongs to the complex I 20 kDa subunit family. In terms of assembly, NDH-1 is composed of 14 different subunits. Subunits NuoB, C, D, E, F, and G constitute the peripheral sector of the complex. It depends on [4Fe-4S] cluster as a cofactor.

It is found in the cell inner membrane. It carries out the reaction a quinone + NADH + 5 H(+)(in) = a quinol + NAD(+) + 4 H(+)(out). NDH-1 shuttles electrons from NADH, via FMN and iron-sulfur (Fe-S) centers, to quinones in the respiratory chain. The immediate electron acceptor for the enzyme in this species is believed to be ubiquinone. Couples the redox reaction to proton translocation (for every two electrons transferred, four hydrogen ions are translocated across the cytoplasmic membrane), and thus conserves the redox energy in a proton gradient. This is NADH-quinone oxidoreductase subunit B from Nitratidesulfovibrio vulgaris (strain DSM 19637 / Miyazaki F) (Desulfovibrio vulgaris).